A 95-amino-acid chain; its full sequence is Aspartyl/glutamyl-tRNA(Asn/Gln) amidotransferase subunit C (95 aa).

Belongs to the GatC family. In terms of assembly, heterotrimer of A, B and C subunits.

The enzyme catalyses L-glutamyl-tRNA(Gln) + L-glutamine + ATP + H2O = L-glutaminyl-tRNA(Gln) + L-glutamate + ADP + phosphate + H(+). It catalyses the reaction L-aspartyl-tRNA(Asn) + L-glutamine + ATP + H2O = L-asparaginyl-tRNA(Asn) + L-glutamate + ADP + phosphate + 2 H(+). Functionally, allows the formation of correctly charged Asn-tRNA(Asn) or Gln-tRNA(Gln) through the transamidation of misacylated Asp-tRNA(Asn) or Glu-tRNA(Gln) in organisms which lack either or both of asparaginyl-tRNA or glutaminyl-tRNA synthetases. The reaction takes place in the presence of glutamine and ATP through an activated phospho-Asp-tRNA(Asn) or phospho-Glu-tRNA(Gln). This chain is Aspartyl/glutamyl-tRNA(Asn/Gln) amidotransferase subunit C, found in Hyphomonas neptunium (strain ATCC 15444).